We begin with the raw amino-acid sequence, 229 residues long: Large ribosomal subunit protein uL1 (229 aa).

The protein belongs to the universal ribosomal protein uL1 family. In terms of assembly, part of the 50S ribosomal subunit.

Functionally, binds directly to 23S rRNA. The L1 stalk is quite mobile in the ribosome, and is involved in E site tRNA release. In terms of biological role, protein L1 is also a translational repressor protein, it controls the translation of the L11 operon by binding to its mRNA. The polypeptide is Large ribosomal subunit protein uL1 (Lactiplantibacillus plantarum (strain ATCC BAA-793 / NCIMB 8826 / WCFS1) (Lactobacillus plantarum)).